The primary structure comprises 179 residues: Protein GrpE (179 aa).

Residues 1–22 form a disordered region; sequence MTDNNIENNEEEIRKAPSANDR. The span at 11–22 shows a compositional bias: basic and acidic residues; the sequence is EEIRKAPSANDR.

This sequence belongs to the GrpE family. As to quaternary structure, homodimer.

Its subcellular location is the cytoplasm. In terms of biological role, participates actively in the response to hyperosmotic and heat shock by preventing the aggregation of stress-denatured proteins, in association with DnaK and GrpE. It is the nucleotide exchange factor for DnaK and may function as a thermosensor. Unfolded proteins bind initially to DnaJ; upon interaction with the DnaJ-bound protein, DnaK hydrolyzes its bound ATP, resulting in the formation of a stable complex. GrpE releases ADP from DnaK; ATP binding to DnaK triggers the release of the substrate protein, thus completing the reaction cycle. Several rounds of ATP-dependent interactions between DnaJ, DnaK and GrpE are required for fully efficient folding. The sequence is that of Protein GrpE from Rickettsia canadensis (strain McKiel).